A 291-amino-acid polypeptide reads, in one-letter code: Probable L-ascorbate peroxidase 3, peroxisomal (291 aa).

Residue histidine 41 is the Proton acceptor of the active site. Residues 114 to 133 (YVPGRRDSSDSPEEGRLPDA) form a disordered region. Residues 116-133 (PGRRDSSDSPEEGRLPDA) are compositionally biased toward basic and acidic residues. Histidine 161 serves as a coordination point for heme b. 3 residues coordinate K(+): threonine 162, threonine 178, and aspartate 185. A helical membrane pass occupies residues 263–283 (LLMQTAAGVAVAAAVVAWAYL).

This sequence belongs to the peroxidase family. Ascorbate peroxidase subfamily. Heme b serves as cofactor. In terms of tissue distribution, expressed in stems.

The protein localises to the peroxisome membrane. The catalysed reaction is L-ascorbate + H2O2 = L-dehydroascorbate + 2 H2O. Plays a key role in hydrogen peroxide removal. This chain is Probable L-ascorbate peroxidase 3, peroxisomal, found in Oryza sativa subsp. japonica (Rice).